The primary structure comprises 423 residues: Glutamate-1-semialdehyde 2,1-aminomutase (423 aa).

The residue at position 262 (lysine 262) is an N6-(pyridoxal phosphate)lysine.

Belongs to the class-III pyridoxal-phosphate-dependent aminotransferase family. HemL subfamily. It depends on pyridoxal 5'-phosphate as a cofactor.

It localises to the cytoplasm. It catalyses the reaction (S)-4-amino-5-oxopentanoate = 5-aminolevulinate. The protein operates within porphyrin-containing compound metabolism; protoporphyrin-IX biosynthesis; 5-aminolevulinate from L-glutamyl-tRNA(Glu): step 2/2. The protein is Glutamate-1-semialdehyde 2,1-aminomutase of Methanosphaera stadtmanae (strain ATCC 43021 / DSM 3091 / JCM 11832 / MCB-3).